A 56-amino-acid polypeptide reads, in one-letter code: Venom peptide 5 (56 aa).

An N-terminal signal peptide occupies residues Met-1–Ala-26. Residues Val-27–Ala-42 constitute a propeptide that is removed on maturation. Cys-49 and Cys-54 are oxidised to a cystine.

Probably contains 1 disulfide bond, which may be crucial for activity, since the linear peptide without disulfide bond is inactive. In terms of tissue distribution, expressed by the venom gland.

It is found in the secreted. The protein is Venom peptide 5 of Eumenes pomiformis (Potter wasp).